We begin with the raw amino-acid sequence, 89 residues long: Small ribosomal subunit protein uS15 (89 aa).

This sequence belongs to the universal ribosomal protein uS15 family. Part of the 30S ribosomal subunit. Forms a bridge to the 50S subunit in the 70S ribosome, contacting the 23S rRNA.

Its function is as follows. One of the primary rRNA binding proteins, it binds directly to 16S rRNA where it helps nucleate assembly of the platform of the 30S subunit by binding and bridging several RNA helices of the 16S rRNA. Functionally, forms an intersubunit bridge (bridge B4) with the 23S rRNA of the 50S subunit in the ribosome. This is Small ribosomal subunit protein uS15 from Geobacillus stearothermophilus (Bacillus stearothermophilus).